A 113-amino-acid chain; its full sequence is Large ribosomal subunit protein uL24 (113 aa).

The protein belongs to the universal ribosomal protein uL24 family. In terms of assembly, part of the 50S ribosomal subunit.

Functionally, one of two assembly initiator proteins, it binds directly to the 5'-end of the 23S rRNA, where it nucleates assembly of the 50S subunit. In terms of biological role, one of the proteins that surrounds the polypeptide exit tunnel on the outside of the subunit. The chain is Large ribosomal subunit protein uL24 from Rickettsia typhi (strain ATCC VR-144 / Wilmington).